The primary structure comprises 154 residues: MSISSGSFAQPAAVVSSPGVTVPEPVASTPTMAELLQQPVYKARWQKMVKGQKNLPAWARKGAGTSGPYENITWGAQQYKVGSLCKPHDCSNNFMWVAFSNDKKHVWGLRVTVADKPEALDNPSKFATYQWLGRPNENIQAMLTAQLEKDPNWR.

The N-terminal stretch at 1-21 is a signal peptide; sequence MSISSGSFAQPAAVVSSPGVT.

The protein belongs to the ivy family.

It localises to the periplasm. This is an uncharacterized protein from Yersinia pestis.